Here is a 218-residue protein sequence, read N- to C-terminus: Probable chemoreceptor glutamine deamidase CheD (218 aa).

It belongs to the CheD family.

The catalysed reaction is L-glutaminyl-[protein] + H2O = L-glutamyl-[protein] + NH4(+). Probably deamidates glutamine residues to glutamate on methyl-accepting chemotaxis receptors (MCPs), playing an important role in chemotaxis. The polypeptide is Probable chemoreceptor glutamine deamidase CheD (Saccharophagus degradans (strain 2-40 / ATCC 43961 / DSM 17024)).